The primary structure comprises 471 residues: Coagulation factor IX (471 aa).

The first 19 residues, Met1–Ala19, serve as a signal peptide directing secretion. A propeptide spanning residues Glu20–Arg39 is cleaved from the precursor. The Gla domain occupies Gly40–Ile85. Residues Asn41, Glu46, Glu47, Glu54, Glu56, Glu59, Glu60, Glu65, Glu66, and Glu69 each coordinate Ca(2+). Glu46, Glu47, Glu54, Glu56, Glu59, Glu60, Glu65, Glu66, Glu69, Glu72, Glu75, and Glu79 each carry 4-carboxyglutamate. A Mg(2+)-binding site is contributed by Glu54. An intrachain disulfide couples Cys57 to Cys62. Glu59 lines the Mg(2+) pocket. Position 65 (Glu65) interacts with Mg(2+). Glu69 lines the Mg(2+) pocket. 5 residues coordinate Ca(2+): Glu75, Glu79, Asp86, Gly87, and Gln89. Residues Glu75 and Glu79 each contribute to the Mg(2+) site. An EGF-like 1; calcium-binding domain is found at Asp86–Glu122. Cystine bridges form between Cys90–Cys101, Cys95–Cys110, Cys112–Cys121, Cys127–Cys138, Cys134–Cys148, Cys150–Cys163, Cys171–Cys345, Cys262–Cys278, Cys392–Cys406, and Cys417–Cys445. A glycan (O-linked (Glc...) serine) is linked at Ser92. Position 103 (Asp103) interacts with Ca(2+). The residue at position 103 (Asp103) is a (3R)-3-hydroxyaspartate. Ser107 is subject to Phosphoserine. The region spanning Ile123–Lys164 is the EGF-like 2 domain. Positions Thr186–Arg235 are cleaved as a propeptide — activation peptide. The Peptidase S1 domain occupies Val236 to Arg469. His277 serves as the catalytic Charge relay system. The Ca(2+) site is built by Glu291, Asn293, Glu296, and Glu301. Asp325 (charge relay system) is an active-site residue. Ser421 acts as the Charge relay system in catalysis.

The protein belongs to the peptidase S1 family. Heterodimer of a light chain and a heavy chain; disulfide-linked. Post-translationally, activated by factor XIa, which excises the activation peptide. The propeptide can also be removed by snake venom protease. Activated by coagulation factor VIIa-tissue factor (F7-F3) complex in calcium-dependent manner. In terms of processing, the iron and 2-oxoglutarate dependent 3-hydroxylation of aspartate and asparagine is (R) stereospecific within EGF domains.

The protein resides in the secreted. It carries out the reaction Selective cleavage of Arg-|-Ile bond in factor X to form factor Xa.. Its function is as follows. Factor IX is a vitamin K-dependent plasma protein that participates in the intrinsic pathway of blood coagulation by converting factor X to its active form in the presence of Ca(2+) ions, phospholipids, and factor VIIIa. The protein is Coagulation factor IX (F9) of Gallus gallus (Chicken).